The chain runs to 316 residues: DMOA farnesyltransferase nvfB (316 aa).

The next 9 membrane-spanning stretches (helical) occupy residues 47 to 67, 71 to 91, 115 to 135, 139 to 159, 162 to 182, 191 to 211, 234 to 254, 258 to 278, and 294 to 314; these read VVGVVFGAAVAPTKLPATILL, LILVLWSLFLRSAGCVWNDVI, WNAVMLTAGIFACGGSLLSFL, CAIEALIEIFFALLYPFGKRF, FPQLILVNIGWAIPMSMHSLG, PTFFMFLFIALVIVMIDVVYS, IELLSYAFFYASTGALLAAGY, LGIPFTVLSVGGHFGGFLYFL, and KLACLIASLFWVVGLFVEYYL.

This sequence belongs to the UbiA prenyltransferase family.

It localises to the membrane. It catalyses the reaction 3,5-dimethylorsellinate + (2E,6E)-farnesyl diphosphate = (3R)-3-farnesyl-6-hydroxy-2,3,5-trimethyl-4-oxocyclohexa-1,5-diene-1-carboxylate + diphosphate + H(+). It participates in secondary metabolite biosynthesis; terpenoid biosynthesis. In terms of biological role, DMOA farnesyltransferase; part of the gene cluster that mediates the biosynthesis of novofumigatonin, a heavily oxygenated meroterpenoid containing a unique orthoester moiety. The first step of the pathway is the synthesis of 3,5-dimethylorsellinic acid (DMOA) by the polyketide synthase nvfA via condensation of one acetyl-CoA starter unit with 3 malonyl-CoA units and 2 methylations. DMOA is then converted to farnesyl-DMOA by the farnesyltransferase nvfB. Epoxydation by FAD-dependent monooxygenase nvfK, followed by a protonation-initiated cyclization catalyzed by the terpene cyclase nvfL leads to the production of asnavolin H. The short chain dehydrogenase nvfC then as a 3-OH dehydrogenase of asnovolin H to yield chemesin D. There are two branches to synthesize asnovolin A from chemesin D. In one branch, chemesin D undergoes Baeyer-Villiger oxidation by nvfH, methylation by nvfJ, and enoyl reduction by the nvfM D enoylreductase that reduces the double bond between C-5'and C-6', to form respectively asnovolin I, asnovolin K, and asnovolin A. In the other branch, the methylation precedes the Baeyer-Villiger oxidation and the enoyl reduction to yield asnovolin A via the asnovolin J intermediate. Asnovolin A is further converted to fumigatonoid A by the Fe(II)/2-oxoglutarate-dependent dioxygenase nvfI that catalyzes an endoperoxidation reaction. The alpha/beta hydrolase nvfD then acts as an epimerase that converts fumigatonoid A to its C-5' epimer, which then undergoes spontaneous or nvfD-catalyzed lactonization. The following step utilizes the ketoreductase nvfG to produce fumigatonoid B. The dioxygenase nvfE further converts fumigatonoid B into fumigatonoid C. Finally the Fe(II)/2-oxoglutarate-dependent dioxygenase nvfF catalyzes two rounds of oxidation to transform fumigatonoid C into the end product, novofumigatonin A. In Aspergillus novofumigatus (strain IBT 16806), this protein is DMOA farnesyltransferase nvfB.